Reading from the N-terminus, the 514-residue chain is Peptide chain release factor 3 (514 aa).

The 261-residue stretch at 8-268 (KKRRTFAIIS…TFLEFAPEPH (261 aa)) folds into the tr-type G domain. Residues 17 to 24 (SHPDAGKT), 85 to 89 (DTPGH), and 139 to 142 (NKLD) each bind GTP.

Belongs to the TRAFAC class translation factor GTPase superfamily. Classic translation factor GTPase family. PrfC subfamily.

Its subcellular location is the cytoplasm. Increases the formation of ribosomal termination complexes and stimulates activities of RF-1 and RF-2. It binds guanine nucleotides and has strong preference for UGA stop codons. It may interact directly with the ribosome. The stimulation of RF-1 and RF-2 is significantly reduced by GTP and GDP, but not by GMP. The sequence is that of Peptide chain release factor 3 from Streptococcus agalactiae serotype Ia (strain ATCC 27591 / A909 / CDC SS700).